The chain runs to 439 residues: GTPase Der (439 aa).

EngA-type G domains follow at residues 3-167 (PTVA…DKVG) and 176-351 (IKVA…GNYT). GTP contacts are provided by residues 9–16 (GRPNVGKS), 56–60 (DTGGI), 119–122 (NKID), 182–189 (GKPNTGKS), 229–233 (DTAGL), and 294–297 (NKWD). Residues 352-436 (RRITTGQIND…PIVFLIREKG (85 aa)) enclose the KH-like domain.

The protein belongs to the TRAFAC class TrmE-Era-EngA-EngB-Septin-like GTPase superfamily. EngA (Der) GTPase family. As to quaternary structure, associates with the 50S ribosomal subunit.

In terms of biological role, GTPase that plays an essential role in the late steps of ribosome biogenesis. The chain is GTPase Der from Caldicellulosiruptor saccharolyticus (strain ATCC 43494 / DSM 8903 / Tp8T 6331).